The following is a 101-amino-acid chain: Small ribosomal subunit protein bS18c (101 aa).

Belongs to the bacterial ribosomal protein bS18 family. Part of the 30S ribosomal subunit.

Its subcellular location is the plastid. The protein resides in the chloroplast. The sequence is that of Small ribosomal subunit protein bS18c from Lactuca sativa (Garden lettuce).